The following is a 109-amino-acid chain: Anti-sigma-B factor antagonist (109 aa).

Positions 3 to 109 constitute an STAS domain; that stretch reads INVDVKQNEN…ISAKSEGGVQ (107 aa). Phosphoserine occurs at positions 52 and 56. T57 bears the Phosphothreonine mark.

The protein belongs to the anti-sigma-factor antagonist family. Monomer. In stressed cells, forms a complex with RsbW. The predominant form of this complex has a stoichiometry of 2:2 (one dimer of RsbW is bound by two monomers of RsbV). Binds to RsbW in the presence of low levels of ATP or under conditions of energy or environmental stress (through dephosphorylation by RsbP or RsbU). Post-translationally, phosphorylated by RsbW on a serine residue. Dephosphorylated by RsbP or RsbU.

In terms of biological role, positive regulator of sigma-B activity. Non-phosphorylated RsbV binds to RsbW, preventing its association with sigma-B. When phosphorylated, releases RsbW, which is then free to complex with and inactivate sigma-B. This is Anti-sigma-B factor antagonist (rsbV) from Bacillus subtilis (strain 168).